We begin with the raw amino-acid sequence, 291 residues long: Methyl-CpG-binding domain protein 3 (291 aa).

One can recognise an MBD domain in the interval 1–72 (MERKRWECPA…DFRTGKMLMS (72 aa)). The required for interaction with MBD2 stretch occupies residues 1–80 (MERKRWECPA…MSKMNKSRQR (80 aa)). Ser-56 bears the Phosphoserine mark. The required for interaction with MBD3L2 stretch occupies residues 60–80 (STFDFRTGKMLMSKMNKSRQR). Lys-73 participates in a covalent cross-link: Glycyl lysine isopeptide (Lys-Gly) (interchain with G-Cter in SUMO2). Ser-85 carries the post-translational modification Phosphoserine. Glycyl lysine isopeptide (Lys-Gly) (interchain with G-Cter in SUMO2) cross-links involve residues Lys-90 and Lys-92. Ser-144 carries the phosphoserine modification. Positions 216 to 245 (KAFMVTDEDIRKQEELVQQVRKRLEEALMA) form a coiled coil. The segment covering 254–267 (LARDGEAPLDKACA) has biased composition (basic and acidic residues). The interval 254–291 (LARDGEAPLDKACAEDDDEEDEEEEEEEPDPDPEMEHV) is disordered. The segment covering 268-291 (EDDDEEDEEEEEEEPDPDPEMEHV) has biased composition (acidic residues).

As to quaternary structure, heterodimer (via N-terminus) with MBD2. Component of the MeCP1 histone deacetylase complex. Component of the nucleosome remodeling and deacetylase (NuRD) repressor complex, composed of core proteins MTA1, MTA2, MTA3, RBBP4, RBBP7, HDAC1, HDAC2, MBD2, MBD3, and peripherally associated proteins CDK2AP1, CDK2AP2, GATAD2A, GATAD2B, CHD3, CHD4 and CHD5. The exact stoichiometry of the NuRD complex is unknown, and some subunits such as MBD2 and MBD3, GATAD2A and GATAD2B, and CHD3, CHD4 and CHD5 define mutually exclusive NuRD complexes. Interacts with MBD3L2 (via N-terminus); the interaction is direct. Interacts with BCL6. Interacts with CDK2AP1. Interacts with HDAC1. Interacts with MTA2. Interacts with DNMT1. Interacts with GATAD2A. Interacts with GATAD2B. Does not interact with PWWP2A. Does not interact with PWWP2B.

It localises to the nucleus. Its subcellular location is the chromosome. Acts as a component of the histone deacetylase NuRD complex which participates in the remodeling of chromatin. Acts as transcriptional repressor and plays a role in gene silencing. Does not bind to methylated DNA by itself. Binds to a lesser degree DNA containing unmethylated CpG dinucleotides. Recruits histone deacetylases and DNA methyltransferases. The chain is Methyl-CpG-binding domain protein 3 (MBD3) from Homo sapiens (Human).